The chain runs to 1077 residues: Ubiquitin-activating enzyme E1 2 (1077 aa).

Positions 16–36 (SPMKKRRIDHTESADGSAINA) are disordered. ATP contacts are provided by residues A499, D525, R536, K549, and 597–598 (DN). The Glycyl thioester intermediate role is filled by C653.

This sequence belongs to the ubiquitin-activating E1 family. Monomer. Expressed in leaves, flowers, roots and stems. Detected in germinating seeds, cotyledons, hypocotyls, vascular tissues, anthers, filaments, pollen, style, stigma, sepals, petals, ovary, developing ovules, funiculi and silique walls.

The enzyme catalyses ATP + ubiquitin + [E1 ubiquitin-activating enzyme]-L-cysteine = AMP + diphosphate + S-ubiquitinyl-[E1 ubiquitin-activating enzyme]-L-cysteine.. Its pathway is protein modification; protein ubiquitination. Its function is as follows. Activates ubiquitin by first adenylating its C-terminal glycine residue with ATP, and thereafter linking this residue to the side chain of a cysteine residue in E1, yielding a ubiquitin-E1 thioester and free AMP. This is Ubiquitin-activating enzyme E1 2 (UBA2) from Arabidopsis thaliana (Mouse-ear cress).